The following is a 377-amino-acid chain: Putative zinc metalloprotease Atu1380 (377 aa).

Position 29 (H29) interacts with Zn(2+). The active site involves E30. H33 lines the Zn(2+) pocket. The next 3 helical transmembrane spans lie at 118–140 (VAAG…FGIY), 299–321 (LGIS…LNLM), and 351–373 (VAFR…NDIS). Residues 129–202 (AILIFAVLFG…TPITVTVERA (74 aa)) enclose the PDZ domain.

This sequence belongs to the peptidase M50B family. Zn(2+) is required as a cofactor.

The protein resides in the cell inner membrane. The polypeptide is Putative zinc metalloprotease Atu1380 (Agrobacterium fabrum (strain C58 / ATCC 33970) (Agrobacterium tumefaciens (strain C58))).